The sequence spans 575 residues: Transmembrane protein 108 (575 aa).

Residues 9-29 (YCQLLSFLLILALTEALAFAI) form a helical membrane-spanning segment. Residues 31–169 (EPSPRESLQV…TTTRRPPRPP (139 aa)) form an interaction with SH3GL2 region. Residues 65–398 (MLTPNPDGPP…PSRVSESTIS (334 aa)) form a disordered region. Residues 74–87 (PSQAAAPMATPTPR) are compositionally biased toward low complexity. Polar residues predominate over residues 95-115 (HTISTIAATVTAPHSESSLST). The segment covering 146–160 (PPGATSRPTTAPPRT) has biased composition (low complexity). The segment at 173–407 (RKGAGNSSRP…SGAKEETVAT (235 aa)) is interaction with DST (isoform 1). Polar residues predominate over residues 244 to 271 (YSSSPQPQTVAATTVPSNTSWAPTTTSL). Positions 290 to 318 (TFTSQGGTPDATAASGAPVSPQAAPVPSQ) are enriched in low complexity. Residues 329 to 352 (PSHSDSWLTVTPGTSRPLSTSSGV) show a composition bias toward polar residues. Residues 353-366 (FTAATGPTPAAFDT) are compositionally biased toward low complexity. A compositionally biased stretch (polar residues) spans 367-398 (SVSAPSQGIPQGASTTPQAPTHPSRVSESTIS). The helical transmembrane segment at 469–489 (IAWVILAISVPISSCSVLLTV) threads the bilayer. Residues 490-575 (CCMKRKKKTA…FVGNDQVSEI (86 aa)) are interaction with CYFIP2.

As to quaternary structure, interacts with DST (isoform 1). Interacts with SH3GL2. Interacts (via N-terminus) with CYFIP1 and CYFIP2; the interactions associate TMEM108 with the WAVE1 complex. Glycosylated.

It is found in the membrane. The protein localises to the postsynaptic density. Its subcellular location is the endosome membrane. The protein resides in the cell projection. It localises to the axon. It is found in the dendrite. The protein localises to the early endosome. Its function is as follows. Transmembrane protein required for proper cognitive functions. Involved in the development of dentate gyrus (DG) neuron circuitry, is necessary for AMPA receptors surface expression and proper excitatory postsynaptic currents of DG granule neurons. Regulates the organization and stability of the microtubule network of sensory neurons to allow axonal transport. Through the interaction with DST, mediates the docking of the dynein/dynactin motor complex to vesicle cargos for retrograde axonal transport. In hippocampal neurons, required for BDNF-dependent dendrite outgrowth. Cooperates with SH3GL2 and recruits the WAVE1 complex to facilitate actin-dependent BDNF:NTRK2 early endocytic trafficking and mediate signaling from early endosomes. This is Transmembrane protein 108 from Homo sapiens (Human).